Consider the following 473-residue polypeptide: Lactate utilization protein B 2 (473 aa).

4Fe-4S ferredoxin-type domains are found at residues 302 to 332 and 351 to 380; these read GSEFRSILQCIRCAACVNVCPVYRHVGGHSY and YDDYKELPYASSLCGACTEACPVKIPLHDL. Cys311, Cys314, Cys317, Cys321, Cys364, Cys367, and Cys371 together coordinate [4Fe-4S] cluster.

This sequence belongs to the LutB/YkgF family.

Is involved in L-lactate degradation and allows cells to grow with lactate as the sole carbon source. Has probably a role as an electron transporter during oxidation of L-lactate. This chain is Lactate utilization protein B 2, found in Bacillus mycoides (strain KBAB4) (Bacillus weihenstephanensis).